Consider the following 503-residue polypeptide: Arginyl-tRNA--protein transferase 1 (503 aa).

The protein belongs to the R-transferase family.

It localises to the cytoplasm. The catalysed reaction is an N-terminal L-alpha-aminoacyl-[protein] + L-arginyl-tRNA(Arg) = an N-terminal L-arginyl-L-aminoacyl-[protein] + tRNA(Arg) + H(+). Involved in the post-translational conjugation of arginine to the N-terminal aspartate or glutamate of a protein. This arginylation is required for degradation of the protein via the ubiquitin pathway. Does not arginylate cysteine residues. The sequence is that of Arginyl-tRNA--protein transferase 1 (ATE1) from Saccharomyces cerevisiae (strain ATCC 204508 / S288c) (Baker's yeast).